The sequence spans 252 residues: Flap endonuclease Xni (252 aa).

Asp103 lines the Mg(2+) pocket. The 90-residue stretch at 159-248 (VLPEQLPDYW…LKGNLQQLRL (90 aa)) folds into the 5'-3' exonuclease domain. Residues Leu170, Ala171, Pro179, Ile181, and Ile184 each coordinate K(+). The interval 183–188 (GIGPKT) is interaction with DNA.

This sequence belongs to the Xni family. Mg(2+) is required as a cofactor. Requires K(+) as cofactor.

In terms of biological role, has flap endonuclease activity. During DNA replication, flap endonucleases cleave the 5'-overhanging flap structure that is generated by displacement synthesis when DNA polymerase encounters the 5'-end of a downstream Okazaki fragment. The polypeptide is Flap endonuclease Xni (Photorhabdus laumondii subsp. laumondii (strain DSM 15139 / CIP 105565 / TT01) (Photorhabdus luminescens subsp. laumondii)).